The primary structure comprises 214 residues: RNA-free ribonuclease P (214 aa).

The protein belongs to the HARP family.

The catalysed reaction is Endonucleolytic cleavage of RNA, removing 5'-extranucleotides from tRNA precursor.. In terms of biological role, RNA-free RNase P that catalyzes the removal of the 5'-leader sequence from pre-tRNA to produce the mature 5'-terminus. In Aeropyrum pernix (strain ATCC 700893 / DSM 11879 / JCM 9820 / NBRC 100138 / K1), this protein is RNA-free ribonuclease P.